A 311-amino-acid polypeptide reads, in one-letter code: Aquaporin Lacbi1:392091 (311 aa).

Residues 1 to 16 (MHPQVASLFDNVYEDL) are Cytoplasmic-facing. Residues 17 to 37 (AAATLEFIGTAFFLLFGLGGI) traverse the membrane as a helical segment. Over 38-56 (QASTAEDTASGQPPASGIE) the chain is Extracellular. Residues 57–77 (HVLYISTCMGLSLVVSAWLFF) traverse the membrane as a helical segment. R78 is a topological domain (cytoplasmic). Residues 79-99 (VTGGLFNPNISFALLLVGGLK) traverse the membrane as a helical segment. The NPA 1 signature appears at 85-87 (NPN). Residue P100 is a topological domain, extracellular. A helical membrane pass occupies residues 101 to 121 (LRFVLFCIAQLTGAIAGAAIV). At 122–143 (RGLTSAPLSVNNVLQQGTSAAQ) the chain is on the cytoplasmic side. A helical membrane pass occupies residues 144 to 164 (GVFIEMFITAALVLSVLMLAA). The Extracellular portion of the chain corresponds to 165 to 168 (EKHE). The chain crosses the membrane as a helical span at residues 169–189 (ATPFAPVGIGLTLFACHLFAV). Residues 190–215 (YYTGAAMNSARAFGPAVISGFPEPQH) lie on the Cytoplasmic side of the membrane. The NPA 2 signature appears at 197–199 (NSA). The helical transmembrane segment at 216-236 (WVYWVGPFLGSLLGAGFYATL) threads the bilayer. Residues 237–311 (KHYKYWHLNP…TSSRTNFSPV (75 aa)) are Extracellular-facing. Positions 276–311 (DEETRNGCASNEEGVRATGDEKSSNATSSRTNFSPV) are disordered. The span at 288–298 (EGVRATGDEKS) shows a compositional bias: basic and acidic residues. The segment covering 299 to 311 (SNATSSRTNFSPV) has biased composition (polar residues). N300 is a glycosylation site (N-linked (GlcNAc...) asparagine).

The protein belongs to the MIP/aquaporin (TC 1.A.8) family.

It is found in the membrane. It catalyses the reaction H2O(in) = H2O(out). It carries out the reaction NH4(+)(in) = NH4(+)(out). In terms of biological role, water channel required to facilitate the transport of water across membranes. Also enables low but statistically significant ammonium permeability. May be involved in fungal nitrogen (ammonium) support of the plant host in symbiosis. The sequence is that of Aquaporin Lacbi1:392091 from Laccaria bicolor (strain S238N-H82 / ATCC MYA-4686) (Bicoloured deceiver).